The primary structure comprises 811 residues: Transmembrane protease serine 6 (811 aa).

The segment at 1 to 48 is disordered; it reads MPRCFQLPCSTRMPTTEVPQAADGQGDAGDGEEAAEPEGKFKPPKNTK. Residues 1-59 lie on the Cytoplasmic side of the membrane; the sequence is MPRCFQLPCSTRMPTTEVPQAADGQGDAGDGEEAAEPEGKFKPPKNTKRKNRDYVRFTP. Over residues 8 to 18 the composition is skewed to polar residues; sequence PCSTRMPTTEV. The helical; Signal-anchor for type II membrane protein transmembrane segment at 60–80 threads the bilayer; that stretch reads LLLVLAALVSAGVMLWYFLGY. Topologically, residues 81–811 are extracellular; sequence KAEVTVSQVY…VINWIQQVLT (731 aa). The SEA domain maps to 86-209; that stretch reads VSQVYSGSLR…EGLVILEASV (124 aa). N-linked (GlcNAc...) asparagine glycosylation is found at Asn138, Asn184, Asn216, Asn338, Asn433, and Asn453. CUB domains are found at residues 213 to 336 and 323 to 440; these read VVLN…QDCQ and FLLS…QISL. A disulfide bond links Cys335 and Cys366. 3 LDL-receptor class A domains span residues 445–477, 478–514, and 518–555; these read VQVYYSLYNQSDPCPGEFLCSVNGLCVPACDGI, KDCPNGLDERNCVCRAMFQCQEDSTCISLPRVCDRQP, and NGSDEEQCQEGVPCGTFTFQCEDRSCVKKPNPECDGQS. 10 disulfides stabilise this stretch: Cys458–Cys470, Cys464–Cys480, Cys474–Cys489, Cys491–Cys503, Cys497–Cys516, Cys510–Cys525, Cys531–Cys543, Cys538–Cys557, Cys551–Cys566, and Cys602–Cys618. Asn518 carries N-linked (GlcNAc...) asparagine glycosylation. A Peptidase S1 domain is found at 577 to 811; the sequence is IVGGTVSSEG…VINWIQQVLT (235 aa). Active-site charge relay system residues include His617 and Asp668. 3 disulfide bridges follow: Cys702/Cys768, Cys733/Cys747, and Cys758/Cys787. Ser762 (charge relay system) is an active-site residue.

The protein belongs to the peptidase S1 family. As to quaternary structure, interacts with HJV. In terms of processing, the single-chain zymogen undergoes autoproteolytic processing. This results in TMPRSS6 shedding from the cell surface and conversion into an activated two-chains form which is released extracellularly. The process involves a trans-activation mechanism that requires TMPRSS6 oligomerization. In terms of tissue distribution, expressed at highest levels in adult mice liver, kidney and uterus. Also strongly expressed within the nasal cavity by olfactory epithelial cells. A weak, but detectable, signal in adult mice tissues analyzed including brain, lung, heart, kidney, spleen, muscle, intestine, thymus and pancreas. No signal in residual embryonic yolk sac, developing kidney tubules or in embryonic tissues analyzed including lung, heart, gastrointestinal tract and epithelium of the oral cavity.

The protein localises to the cell membrane. Its function is as follows. Membrane-bound serine protease. Through the cleavage of cell surface HJV, a regulator of the expression of the iron absorption-regulating hormone hepicidin/HAMP, plays a role in iron homeostasis. In Mus musculus (Mouse), this protein is Transmembrane protease serine 6 (Tmprss6).